Reading from the N-terminus, the 321-residue chain is Glycerol-3-phosphate dehydrogenase [NAD(P)+] (321 aa).

Residues serine 10, phenylalanine 11, arginine 31, arginine 32, and lysine 104 each contribute to the NADPH site. Sn-glycerol 3-phosphate is bound by residues lysine 104 and glycine 132. Alanine 136 is a binding site for NADPH. Residues lysine 186, aspartate 238, serine 248, arginine 249, and asparagine 250 each coordinate sn-glycerol 3-phosphate. The active-site Proton acceptor is lysine 186. Position 249 (arginine 249) interacts with NADPH. Glutamate 272 contributes to the NADPH binding site.

Belongs to the NAD-dependent glycerol-3-phosphate dehydrogenase family.

The protein localises to the cytoplasm. The enzyme catalyses sn-glycerol 3-phosphate + NAD(+) = dihydroxyacetone phosphate + NADH + H(+). It carries out the reaction sn-glycerol 3-phosphate + NADP(+) = dihydroxyacetone phosphate + NADPH + H(+). In terms of biological role, catalyzes the reduction of the glycolytic intermediate dihydroxyacetone phosphate (DHAP) to sn-glycerol 3-phosphate (G3P). In Methanothermobacter thermautotrophicus (strain ATCC 29096 / DSM 1053 / JCM 10044 / NBRC 100330 / Delta H) (Methanobacterium thermoautotrophicum), this protein is Glycerol-3-phosphate dehydrogenase [NAD(P)+].